Here is a 206-residue protein sequence, read N- to C-terminus: Ribonuclease HII (206 aa).

Residues 18–206 (LRIAGVDEVG…PVHNILYQEK (189 aa)) form the RNase H type-2 domain. Positions 24, 25, and 115 each coordinate a divalent metal cation.

It belongs to the RNase HII family. The cofactor is Mn(2+). Requires Mg(2+) as cofactor.

Its subcellular location is the cytoplasm. The enzyme catalyses Endonucleolytic cleavage to 5'-phosphomonoester.. Its function is as follows. Endonuclease that specifically degrades the RNA of RNA-DNA hybrids. In Dinoroseobacter shibae (strain DSM 16493 / NCIMB 14021 / DFL 12), this protein is Ribonuclease HII.